The chain runs to 327 residues: 2-keto-3-deoxygluconate permease (327 aa).

The next 10 helical transmembrane spans lie at 10 to 30 (IPGGMMLVPLFLGALCHTFSP), 42 to 62 (GMITGTVPILAVWFFCMGASI), 73 to 93 (KSGTLVVTKIAVAWVVAAIAS), 95 to 115 (IIPEHGVEVGFFAGLSTLALV), 139 to 159 (AGAFVLMSLESGPLMTMIILG), 163 to 183 (IASFEPHVFVGAVLPFLVGFA), 199 to 219 (VQTLIPFFAFALGNTIDLTVI), 224 to 244 (LLGILLGVAVIIVTGIPLIIA), 254 to 274 (TAGIAASSSAGAAVATPVLIA), and 289 to 309 (SLVATAVIVTSILVPILTSIW).

This sequence belongs to the KdgT transporter family.

The protein localises to the cell inner membrane. It catalyses the reaction 2-dehydro-3-deoxy-D-gluconate(in) + H(+)(in) = 2-dehydro-3-deoxy-D-gluconate(out) + H(+)(out). Catalyzes the proton-dependent uptake of 2-keto-3-deoxygluconate (KDG) into the cell. In Escherichia coli O157:H7, this protein is 2-keto-3-deoxygluconate permease.